Reading from the N-terminus, the 469-residue chain is 3-isopropylmalate dehydratase large subunit (469 aa).

[4Fe-4S] cluster contacts are provided by Cys350, Cys410, and Cys413.

The protein belongs to the aconitase/IPM isomerase family. LeuC type 1 subfamily. As to quaternary structure, heterodimer of LeuC and LeuD. Requires [4Fe-4S] cluster as cofactor.

The catalysed reaction is (2R,3S)-3-isopropylmalate = (2S)-2-isopropylmalate. It participates in amino-acid biosynthesis; L-leucine biosynthesis; L-leucine from 3-methyl-2-oxobutanoate: step 2/4. Its function is as follows. Catalyzes the isomerization between 2-isopropylmalate and 3-isopropylmalate, via the formation of 2-isopropylmaleate. The polypeptide is 3-isopropylmalate dehydratase large subunit (Rhizobium johnstonii (strain DSM 114642 / LMG 32736 / 3841) (Rhizobium leguminosarum bv. viciae)).